The primary structure comprises 224 residues: Peroxiredoxin-6 (224 aa).

The region spanning 5-169 (LLLGDEAPNF…ILRVVDSLQL (165 aa)) is the Thioredoxin domain. The interval 31–40 (DSWGILFSHP) is required and sufficient for targeting to lysosomes and lamellar bodies. Thr-44 is modified (phosphothreonine). The active-site Cysteine sulfenic acid (-SOH) intermediate; for peroxidase activity is Cys-47. Lys-63 is subject to N6-acetyllysine. Phosphotyrosine is present on Tyr-89. Thr-93 is subject to Phosphothreonine. Residue Asp-140 is the For phospholipase activity of the active site. At Thr-177 the chain carries Phosphothreonine; by MAPK. Position 209 is an N6-acetyllysine; alternate (Lys-209). Lys-209 carries the N6-succinyllysine; alternate modification.

This sequence belongs to the peroxiredoxin family. Prx6 subfamily. As to quaternary structure, homodimer. Interacts with GSTP1; mediates PRDX6 glutathionylation and regeneration. Interacts with APEX1. Interacts with STH. May interact with FAM168B. May interact with HTR2A. In terms of processing, irreversibly inactivated by overoxidation of Cys-47 to sulfinic acid (Cys-SO(2)H) and sulfonic acid (Cys-SO(3)H) forms upon oxidative stress. Phosphorylation at Thr-177 by MAP kinases increases the phospholipase activity of the enzyme. The phosphorylated form exhibits a greater lysophosphatidylcholine acyltransferase activity compared to the non-phosphorylated form. In terms of tissue distribution, highly expressed in heart, kidney and liver. Moderate expression in brain and stomach. Very low levels in intestine.

Its subcellular location is the cytoplasm. The protein resides in the lysosome. It carries out the reaction a hydroperoxide + 2 glutathione = an alcohol + glutathione disulfide + H2O. The enzyme catalyses a 1,2-diacyl-sn-glycero-3-phosphocholine + H2O = a 1-acyl-sn-glycero-3-phosphocholine + a fatty acid + H(+). The catalysed reaction is a 1-acyl-sn-glycero-3-phosphocholine + an acyl-CoA = a 1,2-diacyl-sn-glycero-3-phosphocholine + CoA. It catalyses the reaction 1-hexadecanoyl-sn-glycero-3-phosphocholine + hexadecanoyl-CoA = 1,2-dihexadecanoyl-sn-glycero-3-phosphocholine + CoA. It carries out the reaction 1,2-dihexadecanoyl-sn-glycero-3-phosphocholine + H2O = 1-hexadecanoyl-sn-glycero-3-phosphocholine + hexadecanoate + H(+). With respect to regulation, MJ33 or lithium;[(2R)-1-hexadecoxy-3-(2,2,2-trifluoroethoxy)propan-2-yl] methyl phosphate inhibits its phospholipase A2 activity. CI-976 or 2,2-Dimethyl-N-(2,4,6-trimethoxyphenyl)dodecanamide inhibits its lysophosphatidylcholine acyltransferase activity. In terms of biological role, thiol-specific peroxidase that catalyzes the reduction of hydrogen peroxide and organic hydroperoxides to water and alcohols, respectively. Can reduce H(2)O(2) and short chain organic, fatty acid, and phospholipid hydroperoxides. Has phospholipase activity. Can either reduce the oxidized sn-2 fatty acyl group of phospholipids (peroxidase activity) or hydrolyze the sn-2 ester bond of phospholipids (phospholipase activity). These activities are dependent on binding to phospholipids at acidic pH and to oxidized phospholipds at cytosolic pH. Plays a role in cell protection against oxidative stress by detoxifying peroxides and in phospholipid homeostasis. Exhibits acyl-CoA-dependent lysophospholipid acyltransferase which mediates the conversion of lysophosphatidylcholine (1-acyl-sn-glycero-3-phosphocholine or LPC) into phosphatidylcholine (1,2-diacyl-sn-glycero-3-phosphocholine or PC). Shows a clear preference for LPC as the lysophospholipid and for palmitoyl CoA as the fatty acyl substrate. The sequence is that of Peroxiredoxin-6 (Prdx6) from Mus musculus (Mouse).